Reading from the N-terminus, the 397-residue chain is Elongation factor Tu (397 aa).

In terms of domain architecture, tr-type G spans 10-207 (KPHVNVGTVG…AIDAYVPDPV (198 aa)). The segment at 19–26 (GHIDHGKT) is G1. 19–26 (GHIDHGKT) provides a ligand contact to GTP. Threonine 26 is a binding site for Mg(2+). The G2 stretch occupies residues 60-64 (GITIA). Positions 81-84 (DCPG) are G3. Residues 81–85 (DCPGH) and 136–139 (NKVD) each bind GTP. The G4 stretch occupies residues 136–139 (NKVD). The tract at residues 174-176 (SAL) is G5.

Belongs to the TRAFAC class translation factor GTPase superfamily. Classic translation factor GTPase family. EF-Tu/EF-1A subfamily. As to quaternary structure, monomer.

It is found in the cytoplasm. It carries out the reaction GTP + H2O = GDP + phosphate + H(+). Functionally, GTP hydrolase that promotes the GTP-dependent binding of aminoacyl-tRNA to the A-site of ribosomes during protein biosynthesis. The chain is Elongation factor Tu from Syntrophobacter fumaroxidans (strain DSM 10017 / MPOB).